A 605-amino-acid polypeptide reads, in one-letter code: Inactive LRR receptor-like serine/threonine-protein kinase BIR2 (605 aa).

The N-terminal stretch at M1 to A28 is a signal peptide. Residues A29–G229 are Extracellular-facing. N-linked (GlcNAc...) asparagine glycosylation occurs at N58. LRR repeat units follow at residues C101–W125, P127–C150, F152–A173, and L174–S197. The chain crosses the membrane as a helical span at residues I230–W250. At W251 to V605 the chain is on the cytoplasmic side. Phosphoserine; by BAK1 is present on S271. T283 bears the Phosphothreonine; by BAK1 mark. Residue S286 is modified to Phosphoserine; by BAK1. T304 bears the Phosphothreonine; by BAK1 mark. The Protein kinase domain occupies F307–I578. An ATP-binding site is contributed by I313–T321. S330 is modified (phosphoserine; by BAK1). K335 lines the ATP pocket. Phosphoserine; by BAK1 is present on S389. A Phosphothreonine modification is found at T402. A phosphoserine; by BAK1 mark is found at S448 and S462. Residue T466 is modified to Phosphothreonine; by BAK1. The residue at position 479 (Y479) is a Phosphotyrosine. At T482 the chain carries Phosphothreonine. S486 is subject to Phosphoserine. T533 carries the post-translational modification Phosphothreonine; by BAK1.

The protein belongs to the protein kinase superfamily. Ser/Thr protein kinase family. Interacts constitutively with BAK1, when phosphorylated, thereby preventing interaction with the ligand-binding LRR-RLK FLS2. Upon infection, pathogen-associated molecular patterns (PAMP) perception leads to BIR2 release from the BAK1 complex and enables the recruitment of BAK1 into the FLS2 complex. Post-translationally, phosphorylated by BAK1, this interacts promotes interaction with BAK1.

The protein resides in the cell membrane. Functionally, pseudokinases lacking protein kinase activity and unable to bind ATP-analogs. Negative regulator of pathogen-associated molecular patterns- (PAMP-) triggered immunity by limiting BAK1-receptor complex formation in the absence of ligands. The polypeptide is Inactive LRR receptor-like serine/threonine-protein kinase BIR2 (Arabidopsis thaliana (Mouse-ear cress)).